A 394-amino-acid chain; its full sequence is Elongation factor Tu, mitochondrial (394 aa).

In terms of domain architecture, tr-type G spans 10-204; sequence KPHCNIGTIG…AVDNYIPQPE (195 aa). The interval 19–26 is G1; it reads GHVDHGKT. A GTP-binding site is contributed by 19-26; the sequence is GHVDHGKT. The G2 stretch occupies residues 60 to 64; the sequence is GITIS. The tract at residues 81-84 is G3; the sequence is DCPG. GTP is bound by residues 81-85 and 136-139; these read DCPGH and NKVD. Residues 136–139 are G4; that stretch reads NKVD. The G5 stretch occupies residues 174–176; it reads SAL.

Belongs to the TRAFAC class translation factor GTPase superfamily. Classic translation factor GTPase family. EF-Tu/EF-1A subfamily.

It is found in the mitochondrion. Its function is as follows. This protein promotes the GTP-dependent binding of aminoacyl-tRNA to the A-site of ribosomes during protein biosynthesis. In Reclinomonas americana, this protein is Elongation factor Tu, mitochondrial (TUFA).